The following is a 395-amino-acid chain: Homoserine O-acetyltransferase (395 aa).

The AB hydrolase-1 domain maps to 65–363 (PIVLIEHALT…SPTGHDGFLI (299 aa)). Catalysis depends on Ser-160, which acts as the Nucleophile. Residue Arg-230 coordinates substrate. Catalysis depends on residues Asp-328 and His-358. Asp-359 is a binding site for substrate.

This sequence belongs to the AB hydrolase superfamily. MetX family. As to quaternary structure, homodimer.

The protein resides in the cytoplasm. It carries out the reaction L-homoserine + acetyl-CoA = O-acetyl-L-homoserine + CoA. Its pathway is amino-acid biosynthesis; L-methionine biosynthesis via de novo pathway; O-acetyl-L-homoserine from L-homoserine: step 1/1. Functionally, transfers an acetyl group from acetyl-CoA to L-homoserine, forming acetyl-L-homoserine. The chain is Homoserine O-acetyltransferase from Corynebacterium jeikeium (strain K411).